The sequence spans 353 residues: Photosystem II D2 protein (353 aa).

At Thr-2 the chain carries N-acetylthreonine. Position 2 is a phosphothreonine (Thr-2). The helical transmembrane segment at 41–61 threads the bilayer; it reads CAYFALGGWFTGTTFVTSWYT. Residue His-118 participates in chlorophyll a binding. Residues 125 to 141 form a helical membrane-spanning segment; that stretch reads GFMLRQFELARSVQLRP. 2 residues coordinate pheophytin a: Gln-130 and Asn-143. Residues 153–166 traverse the membrane as a helical segment; it reads VFVSVFLIYPLGQS. His-198 is a chlorophyll a binding site. Residues 208 to 228 traverse the membrane as a helical segment; it reads AALLCAIHGATVENTLFEDGD. A plastoquinone-binding residues include His-215 and Phe-262. Residue His-215 participates in Fe cation binding. His-269 lines the Fe cation pocket. The chain crosses the membrane as a helical span at residues 279-295; that stretch reads GLWMSAIGVVGLALNLR.

It belongs to the reaction center PufL/M/PsbA/D family. In terms of assembly, PSII is composed of 1 copy each of membrane proteins PsbA, PsbB, PsbC, PsbD, PsbE, PsbF, PsbH, PsbI, PsbJ, PsbK, PsbL, PsbM, PsbT, PsbX, PsbY, PsbZ, Psb30/Ycf12, at least 3 peripheral proteins of the oxygen-evolving complex and a large number of cofactors. It forms dimeric complexes. The D1/D2 heterodimer binds P680, chlorophylls that are the primary electron donor of PSII, and subsequent electron acceptors. It shares a non-heme iron and each subunit binds pheophytin, quinone, additional chlorophylls, carotenoids and lipids. There is also a Cl(-1) ion associated with D1 and D2, which is required for oxygen evolution. The PSII complex binds additional chlorophylls, carotenoids and specific lipids. is required as a cofactor.

It localises to the plastid. Its subcellular location is the chloroplast thylakoid membrane. The enzyme catalyses 2 a plastoquinone + 4 hnu + 2 H2O = 2 a plastoquinol + O2. Functionally, photosystem II (PSII) is a light-driven water:plastoquinone oxidoreductase that uses light energy to abstract electrons from H(2)O, generating O(2) and a proton gradient subsequently used for ATP formation. It consists of a core antenna complex that captures photons, and an electron transfer chain that converts photonic excitation into a charge separation. The D1/D2 (PsbA/PsbD) reaction center heterodimer binds P680, the primary electron donor of PSII as well as several subsequent electron acceptors. D2 is needed for assembly of a stable PSII complex. In Oryza nivara (Indian wild rice), this protein is Photosystem II D2 protein.